Here is a 584-residue protein sequence, read N- to C-terminus: 2-isopropylmalate synthase (584 aa).

A Pyruvate carboxyltransferase domain is found at 45-323; sequence PRWLSTDLRD…SPNLDFSKLD (279 aa). Positions 54, 262, 264, and 298 each coordinate a divalent metal cation.

This sequence belongs to the alpha-IPM synthase/homocitrate synthase family. LeuA type 2 subfamily. As to quaternary structure, homodimer. A divalent metal cation serves as cofactor.

It carries out the reaction 3-methyl-2-oxobutanoate + acetyl-CoA + H2O = (2S)-2-isopropylmalate + CoA + H(+). The protein operates within amino-acid biosynthesis; L-leucine biosynthesis; L-leucine from 3-methyl-2-oxobutanoate: step 1/4. Functionally, catalyzes the condensation of the acetyl group of acetyl-CoA with 3-methyl-2-oxobutanoate (2-oxoisovalerate) to form 3-carboxy-3-hydroxy-4-methylpentanoate (2-isopropylmalate). This Schizosaccharomyces pombe (strain 972 / ATCC 24843) (Fission yeast) protein is 2-isopropylmalate synthase (leu3).